The following is a 250-amino-acid chain: Flavin-dependent thymidylate synthase (250 aa).

The ThyX domain maps to 7-233; that stretch reads LRVQLIAKTE…PQVFSDFEIV (227 aa). FAD is bound by residues Ser71, 95 to 97, and Gln103; that span reads RHR. Residues 92 to 95, 103 to 107, and Arg172 contribute to the dUMP site; these read ELIR and QLSQR. The ThyX motif motif lies at 95 to 105; the sequence is RHRHFSYSQLS. FAD contacts are provided by residues 188–190 and His194; that span reads NYR. Arg199 provides a ligand contact to dUMP. The active-site Involved in ionization of N3 of dUMP, leading to its activation is Arg199.

This sequence belongs to the thymidylate synthase ThyX family. As to quaternary structure, homotetramer. FAD is required as a cofactor.

It carries out the reaction dUMP + (6R)-5,10-methylene-5,6,7,8-tetrahydrofolate + NADPH + H(+) = dTMP + (6S)-5,6,7,8-tetrahydrofolate + NADP(+). It functions in the pathway pyrimidine metabolism; dTTP biosynthesis. In terms of biological role, catalyzes the reductive methylation of 2'-deoxyuridine-5'-monophosphate (dUMP) to 2'-deoxythymidine-5'-monophosphate (dTMP) while utilizing 5,10-methylenetetrahydrofolate (mTHF) as the methyl donor, and NADPH and FADH(2) as the reductant. The chain is Flavin-dependent thymidylate synthase from Mycolicibacterium vanbaalenii (strain DSM 7251 / JCM 13017 / BCRC 16820 / KCTC 9966 / NRRL B-24157 / PYR-1) (Mycobacterium vanbaalenii).